The chain runs to 360 residues: E3 ubiquitin-protein ligase RNF146 (360 aa).

The segment at 37-75 adopts an RING-type zinc-finger fold; it reads CAICLQTCVHPVSLPCKHVFCYLCVKGASWLGKRCALCR. Residues Lys-85 and Lys-95 each participate in a glycyl lysine isopeptide (Lys-Gly) (interchain with G-Cter in ubiquitin) cross-link. The WWE domain maps to 92–168; sequence EELKAASRGN…EHGRRRKIKR (77 aa). Tyr-108, Arg-111, and Trp-115 together coordinate a glycoprotein. Lys-131 is covalently cross-linked (Glycyl lysine isopeptide (Lys-Gly) (interchain with G-Cter in ubiquitin)). Tyr-145, Gln-154, Arg-164, and Lys-176 together coordinate a glycoprotein. Lys-176 participates in a covalent cross-link: Glycyl lysine isopeptide (Lys-Gly) (interchain with G-Cter in ubiquitin). The interval 259–360 is disordered; sequence ERSHRGEGEE…PDGQCTVTEV (102 aa). Residues 284–294 are compositionally biased toward acidic residues; it reads SIEETESDASS. Residues Ser-290 and Ser-294 each carry the phosphoserine modification. Residues 295–305 are compositionally biased toward low complexity; it reads DSENVSSAVVA. Positions 307-333 are enriched in polar residues; the sequence is HSLTQQRLLVSNANQTVSDRSDQSGTD.

In terms of assembly, can form homooligomers. Interacts with PARsylated AXIN1, AXIN2, BLZF1, CASC3, H1-2, IPO7, LIG3, NCL, PARP1, XRCC1, XRCC5 and XRCC6. Interacts with DDB1, DHX15, IQGAP1, LRPPRC, PARP2, PRKDC, RUVBL2, TNKS1 and TNKS2. Binding often leads to interactor ubiquitination, in the presence of the appropriate E1 and E2 enzymes, and proteasomal degradation. Ubiquitinated; autoubiquitinated. Autoubiquitination is enhanced upon poly(ADP-ribose)-binding.

It is found in the cytoplasm. It localises to the cytosol. Its subcellular location is the nucleus. It carries out the reaction S-ubiquitinyl-[E2 ubiquitin-conjugating enzyme]-L-cysteine + [acceptor protein]-L-lysine = [E2 ubiquitin-conjugating enzyme]-L-cysteine + N(6)-ubiquitinyl-[acceptor protein]-L-lysine.. It functions in the pathway protein modification; protein ubiquitination. E3 ubiquitin-protein ligase that specifically binds poly-ADP-ribosylated (PARsylated) proteins and mediates their ubiquitination and subsequent degradation. May regulate many important biological processes, such as cell survival and DNA damage response. Acts as an activator of the Wnt signaling pathway by mediating the ubiquitination of PARsylated AXIN1 and AXIN2, 2 key components of the beta-catenin destruction complex. Acts in cooperation with tankyrase proteins (TNKS and TNKS2), which mediate PARsylation of target proteins AXIN1, AXIN2, BLZF1, CASC3, TNKS and TNKS2. Recognizes and binds tankyrase-dependent PARsylated proteins via its WWE domain and mediates their ubiquitination, leading to their degradation. Different ubiquitin linkage types have been observed: TNKS2 undergoes ubiquitination at 'Lys-48' and 'Lys-63', while AXIN1 is only ubiquitinated at 'Lys-48'. May regulate TNKS and TNKS2 subcellular location, preventing aggregation at a centrosomal location. Neuroprotective protein. Protects the brain against N-methyl-D-aspartate (NMDA) receptor-mediated glutamate excitotoxicity and ischemia, by interfering with PAR-induced cell death, called parthanatos. Prevents nuclear translocation of AIFM1 in a PAR-binding dependent manner. Does not affect PARP1 activation. Protects against cell death induced by DNA damaging agents, such as N-methyl-N-nitro-N-nitrosoguanidine (MNNG) and rescues cells from G1 arrest. Promotes cell survival after gamma-irradiation. Facilitates DNA repair. In Macaca fascicularis (Crab-eating macaque), this protein is E3 ubiquitin-protein ligase RNF146 (RNF146).